The sequence spans 303 residues: Leukocyte immunoglobulin-like receptor subfamily B member 4B (303 aa).

Positions 1-23 (MIAMLTVLLYLALILEPRTAVQA) are cleaved as a signal peptide. Residues 24 to 238 (GHLPKPIIWA…TEDGLETYQK (215 aa)) are Extracellular-facing. Ig-like C2-type domains follow at residues 42–123 (YTSV…AYEN) and 124–212 (PSLS…KPSN). A disulfide bond links Cys49 and Cys98. Asn79, Asn133, and Asn191 each carry an N-linked (GlcNAc...) asparagine glycan. An intrachain disulfide couples Cys144 to Cys196. A helical transmembrane segment spans residues 239 to 260 (ILIGVLVSFLLLFFLLLFLILI). Residues 261-303 (GYQCRHKNKANASVKNTQSEDNAELNSWNPQNEDPPRELCTPR) are Cytoplasmic-facing. Residues 275–292 (KNTQSEDNAELNSWNPQN) show a composition bias toward polar residues. The segment at 275–303 (KNTQSEDNAELNSWNPQNEDPPRELCTPR) is disordered.

As to quaternary structure, monomer and homodimer. In terms of tissue distribution, expressed on mast cells (at protein level). Also expressed at much lower levels on natural killer cells (at protein level).

The protein resides in the cell membrane. Its function is as follows. Plays a role in mast cell activation. The polypeptide is Leukocyte immunoglobulin-like receptor subfamily B member 4B (Mus musculus (Mouse)).